We begin with the raw amino-acid sequence, 616 residues long: Cleavage stimulation factor subunit 2 tau variant (616 aa).

Positions 16–94 constitute an RRM domain; it reads RSVFVGNIPY…RALRVDNAAS (79 aa). 2 disordered regions span residues 203-241 and 262-418; these read GKSQ…QPQH and IPAP…SRAM. Low complexity-rich tracts occupy residues 223-233 and 319-331; these read PGPNVLLNQQN and VTPG…GLLG. Thr-320 carries the phosphothreonine modification. The span at 368–381 shows a compositional bias: basic and acidic residues; that stretch reads SGHDTRGPSSHEMR. A 1-1 repeat occupies 418 to 422; sequence METRA. Residues 418-462 form a 9 X 5 AA tandem repeats of M-E-T-R-[AG] region; it reads METRAMETEVLETRVMERRGMETCAMETRGMEARGMDARGLEMRG. One copy of the 1-2; approximate repeat lies at 423 to 427; the sequence is METEV. A 1-3; approximate repeat occupies 428–432; the sequence is LETRV. Residues 433–437 form a 1-4; approximate repeat; it reads MERRG. The stretch at 438–442 is one 1-5; approximate repeat; that stretch reads METCA. The 1-6 repeat unit spans residues 443–447; that stretch reads METRG. The stretch at 448 to 452 is one 1-7; approximate repeat; sequence MEARG. The stretch at 453-457 is one 1-8; approximate repeat; it reads MDARG. A 1-9; approximate repeat occupies 458–462; that stretch reads LEMRG. 4 tandem repeats follow at residues 505–509, 510–514, 515–519, and 520–524. Residues 505–549 are 9 X 5 AA tandem repeats of G-[AT]-G-[MI]-Q; sequence GAGMQGTGIQGTGMQGAGIQGGGMQGAGIQGVSIQGGGIQGGGIQ. Residues 525–529 form a 2-5; approximate repeat; it reads GGGMQ. The 2-6 repeat unit spans residues 530–534; sequence GAGIQ. A 2-7; approximate repeat occupies 535–539; sequence GVSIQ. The 2-8; approximate repeat unit spans residues 540 to 544; the sequence is GGGIQ. Residues 542–573 are disordered; it reads GIQGGGIQGASKQGGSQPSSFSPGQSQVTPQD. Residues 545–549 form a 2-9; approximate repeat; that stretch reads GGGIQ. Positions 550 to 568 are enriched in low complexity; sequence GASKQGGSQPSSFSPGQSQ. Phosphoserine is present on Ser-563.

Its subcellular location is the nucleus. May play a significant role in AAUAAA-independent mRNA polyadenylation in germ cells. Directly involved in the binding to pre-mRNAs. The chain is Cleavage stimulation factor subunit 2 tau variant (CSTF2T) from Homo sapiens (Human).